Reading from the N-terminus, the 494-residue chain is Serine/arginine-rich splicing factor 4 (494 aa).

The RRM 1 domain maps to 2–72; it reads PRVYIGRLSY…ERVIVEHARG (71 aa). Disordered regions lie at residues 72–95 and 169–494; these read GPRR…GRDK and KIRL…HSRS. 2 positions are modified to phosphoserine: Ser-78 and Ser-84. Residues 104 to 177 form the RRM 2 domain; the sequence is YRLIVENLSS…RKIRLVEDKP (74 aa). 2 stretches are compositionally biased toward basic residues: residues 179–206 and 214–246; these read SRRR…KSRS and SHSK…KKEK. A compositionally biased stretch (basic and acidic residues) spans 247–256; that stretch reads SRSPSKEKSR. A compositionally biased stretch (basic residues) spans 257–267; it reads SRSHSAGKSRS. Residues 268 to 278 show a composition bias toward basic and acidic residues; the sequence is KSKDQAEEKIQ. The span at 286–302 shows a compositional bias: basic residues; it reads PKSRSPSRHKSKSKSRS. Phosphoserine is present on residues Ser-288, Ser-290, and Ser-292. Residues 303-327 are compositionally biased toward basic and acidic residues; it reads RSQERRVEEEKRGSVSRGRSQEKSL. Composition is skewed to basic residues over residues 328–359 and 367–382; these read RQSR…GRKR and RSRS…KRGS. The span at 411–431 shows a compositional bias: basic and acidic residues; the sequence is VSKEREHAKSESSQREGRGES. Ser-431, Ser-446, Ser-456, Ser-458, and Ser-460 each carry phosphoserine. Residues 449–460 are compositionally biased toward low complexity; that stretch reads KSKPNLPSESRS. A compositionally biased stretch (basic residues) spans 461 to 494; sequence RSKSASKTRSRSKSRSRSASRSPSRSRSRSHSRS.

Belongs to the splicing factor SR family. Found in a pre-mRNA splicing complex with SRSF4/SFRS4, SRSF5/SFRS5, SNRNP70, SNRPA1, SRRM1 and SRRM2. Interacts with PNN. Post-translationally, extensively phosphorylated on serine residues in the RS domain.

Its subcellular location is the nucleus speckle. Plays a role in alternative splice site selection during pre-mRNA splicing. Represses the splicing of MAPT/Tau exon 10. This is Serine/arginine-rich splicing factor 4 (SRSF4) from Homo sapiens (Human).